A 293-amino-acid chain; its full sequence is Ribosomal protein L11 methyltransferase (293 aa).

S-adenosyl-L-methionine is bound by residues Thr145, Gly166, Asp188, and Asn230.

This sequence belongs to the methyltransferase superfamily. PrmA family.

The protein localises to the cytoplasm. The enzyme catalyses L-lysyl-[protein] + 3 S-adenosyl-L-methionine = N(6),N(6),N(6)-trimethyl-L-lysyl-[protein] + 3 S-adenosyl-L-homocysteine + 3 H(+). In terms of biological role, methylates ribosomal protein L11. In Actinobacillus pleuropneumoniae serotype 5b (strain L20), this protein is Ribosomal protein L11 methyltransferase.